The sequence spans 427 residues: U1 small nuclear ribonucleoprotein 70 kDa (427 aa).

Disordered stretches follow at residues 82 to 102 (EPGDPEYAPPKPEVELPSQKR) and 215 to 427 (RGRT…EYVR). Over residues 93–102 (PEVELPSQKR) the composition is skewed to basic and acidic residues. One can recognise an RRM domain in the interval 138–216 (KTLFVSRLNY…RRVLVDVERG (79 aa)). Over residues 227 to 241 (LGGGLGTSRVGGGEE) the composition is skewed to gly residues. Composition is skewed to basic and acidic residues over residues 257–402 (EPSR…RYDK) and 409–427 (RYEREYKRSKRSESREYVR). Ser-282 bears the Phosphoserine mark.

As to quaternary structure, component of the spliceosome. Interacts with CYP63, U2AF35A, U2AF35B, SRZ21, RSZ22, SR34, SR45, SR45A and SCL33. In terms of processing, phosphorylated. The association and dissociation with SR45 is not affected by the phosphorylation status. Ubiquitous.

Its subcellular location is the nucleus speckle. It is found in the nucleus. The protein localises to the nucleoplasm. In terms of biological role, mediates the splicing of pre-mRNA by binding to the loop I region of U1-snRNA. The protein is U1 small nuclear ribonucleoprotein 70 kDa (RNU1) of Arabidopsis thaliana (Mouse-ear cress).